The primary structure comprises 142 residues: Small ribosomal subunit protein bS18m (142 aa).

Belongs to the bacterial ribosomal protein bS18 family. As to quaternary structure, component of the mitochondrial small ribosomal subunit (mt-SSU). Mature mammalian 55S mitochondrial ribosomes consist of a small (28S) and a large (39S) subunit. The 28S small subunit contains a 12S ribosomal RNA (12S mt-rRNA) and 30 different proteins. The 39S large subunit contains a 16S rRNA (16S mt-rRNA), a copy of mitochondrial valine transfer RNA (mt-tRNA(Val)), which plays an integral structural role, and 52 different proteins. bS18m has a zinc binding site.

Its subcellular location is the mitochondrion. In Homo sapiens (Human), this protein is Small ribosomal subunit protein bS18m (MRPS18C).